We begin with the raw amino-acid sequence, 188 residues long: Scytalone dehydratase (188 aa).

Residues Y27, Y47, and F50 each coordinate substrate. Residues H82 and H107 contribute to the active site. A substrate-binding site is contributed by N128.

This sequence belongs to the scytalone dehydratase family. As to quaternary structure, homotrimer. Each subunit contains an active site, located in the central part of the hydrophobic core of the monomer, which functions independently.

The protein localises to the endosome. It catalyses the reaction scytalone = 1,3,8-trihydroxynaphthalene + H2O. The protein operates within pigment biosynthesis; melanin biosynthesis. Its activity is regulated as follows. Carpropamid acts as an efficient inhibitor of scytalone dehydratase activity. Scytalone dehydratase; part of the gene cluster that mediates the biosynthesis of dihydroxynaphthalene (DHN)-melanin, a bluish-green pigment and a structural component of the conidial wall. Within the pathway, catalyzes the dehydration of scytalone as well as of vermelone. This Colletotrichum orbiculare (strain 104-T / ATCC 96160 / CBS 514.97 / LARS 414 / MAFF 240422) (Cucumber anthracnose fungus) protein is Scytalone dehydratase.